A 201-amino-acid polypeptide reads, in one-letter code: Akirin-2 (201 aa).

Phosphoserine is present on residues Ser-18 and Ser-21. The Nuclear localization signal signature appears at Lys-23–Ala-28. Ser-55 bears the Phosphoserine mark. The short motif at Ser-198–Ser-201 is the SYVS motif element.

It belongs to the akirin family. As to quaternary structure, homodimer. Interacts with IPO9; the interaction is direct. Associates with 20S and 26S proteasomes. Interacts with SMARCD1; promoting SWI/SNF complex recruitment. Interacts with NFKBIZ. Interacts with YWHAB. Polyubiquitinated. Polyubiquitination is dependent of UBR5 that extends pre-ubiquitinated AKIRIN2.

The protein resides in the nucleus. The protein localises to the cytoplasm. It is found in the membrane. Functionally, molecular adapter that acts as a bridge between a variety of multiprotein complexes, and which is involved in embryonic development, immunity, myogenesis and brain development. Plays a key role in nuclear protein degradation by promoting import of proteasomes into the nucleus: directly binds to fully assembled 20S proteasomes at one end and to nuclear import receptor IPO9 at the other end, bridging them together and mediating the import of pre-assembled proteasome complexes through the nuclear pore. Involved in innate immunity by regulating the production of interleukin-6 (IL6) downstream of Toll-like receptor (TLR): acts by bridging the NF-kappa-B inhibitor NFKBIZ and the SWI/SNF complex, leading to promote induction of IL6. Also involved in adaptive immunity by promoting B-cell activation. Involved in brain development: required for the survival and proliferation of cerebral cortical progenitor cells. Involved in myogenesis: required for skeletal muscle formation and skeletal development, possibly by regulating expression of muscle differentiation factors. Also plays a role in facilitating interdigital tissue regression during limb development. In Mus musculus (Mouse), this protein is Akirin-2.